The primary structure comprises 492 residues: Metal cation symporter ZIP14 (492 aa).

The first 30 residues, 1 to 30, serve as a signal peptide directing secretion; that stretch reads MKLLLLHPAFQSCLLLTLLGLWRTTPEAHA. The Extracellular portion of the chain corresponds to 31–157; the sequence is SSLGAPAISA…PSAVEVWGYG (127 aa). N-linked (GlcNAc...) asparagine glycans are attached at residues N77, N87, and N102. The chain crosses the membrane as a helical span at residues 158-178; sequence LLCVTVISLCSLLGASVVPFM. Topologically, residues 179–186 are cytoplasmic; it reads KKTFYKRL. A helical membrane pass occupies residues 187-207; sequence LLYFIALAIGTLYSNALFQLI. Residues 208–224 are Extracellular-facing; it reads PEAFGFNPLEDYYVSKS. Residues 225–245 form a helical membrane-spanning segment; the sequence is AVVFGGFYLFFFTEKILKILL. The Cytoplasmic segment spans residues 246 to 397; sequence KQKNEHHHGH…LLNAGMSIQQ (152 aa). Positions 251-258 match the HHHGHXHX-motif motif; it reads HHHGHSHY. The short motif at 376-381 is the XEXPHE-motif element; the sequence is EEFPHE. A helical membrane pass occupies residues 398–418; the sequence is ALFFNFLSACCCYLGLAFGIL. Residues 419 to 424 lie on the Extracellular side of the membrane; that stretch reads AGSHFS. The helical transmembrane segment at 425–445 threads the bilayer; it reads ANWIFALAGGMFLYISLADMF. Over 446–460 the chain is Cytoplasmic; sequence PEMNEVCQEDERKGS. Residues 461-481 form a helical membrane-spanning segment; the sequence is ILIPFIIQNLGLLTGFTIMVV. Residues 482–492 lie on the Extracellular side of the membrane; it reads LTMYSGQIQIG.

This sequence belongs to the ZIP transporter (TC 2.A.5) family. Homotrimer. Ubiquitinated. Ubiquitination occurs upon iron depletion. The ubiquitinated form undergoes proteasomal degradation. In terms of processing, N-glycosylated. N-glycosylation at Asn-102 is required for iron-regulated extraction of the transporter from membranes and subsequent proteasomal degradation. As to expression, ubiquitously expressed, with higher expression in liver, pancreas, fetal liver, thyroid gland, left and right ventricle, right atrium and fetal heart. Weakly expressed in spleen, thymus, and peripheral blood leukocytes. Expressed in liver and in brain by large neurons in the globus pallidus, the insular cortex and the dentate nucleus and to a lower extent in the putamen and the caudate nucleus (at protein level). Expressed in osteoblasts and giant osteoclast-like cells, but not in osteocytes found osteoblastoma and giant cell tumors (at protein level). Expressed by microvascular capillary endothelial cells that constitute the blood-brain barrier (at protein level). Expressed by macrophages. Widely expressed but not detected in brain, heart, skeletal muscle, placenta and fetal skin.

Its subcellular location is the cell membrane. The protein localises to the apical cell membrane. It is found in the basolateral cell membrane. The protein resides in the early endosome membrane. It localises to the late endosome membrane. Its subcellular location is the lysosome membrane. It carries out the reaction Zn(2+)(out) + 2 hydrogencarbonate(out) = Zn(2+)(in) + 2 hydrogencarbonate(in). It catalyses the reaction Mn(2+)(out) + 2 hydrogencarbonate(out) = Mn(2+)(in) + 2 hydrogencarbonate(in). The enzyme catalyses Fe(2+)(out) + 2 hydrogencarbonate(out) = Fe(2+)(in) + 2 hydrogencarbonate(in). The catalysed reaction is Cd(2+)(out) + 2 hydrogencarbonate(out) = Cd(2+)(in) + 2 hydrogencarbonate(in). Its function is as follows. Electroneutral transporter of the plasma membrane mediating the cellular uptake of the divalent metal cations zinc, manganese and iron that are important for tissue homeostasis, metabolism, development and immunity. Functions as an energy-dependent symporter, transporting through the membranes an electroneutral complex composed of a divalent metal cation and two bicarbonate anions. Beside these endogenous cellular substrates, can also import cadmium a non-essential metal which is cytotoxic and carcinogenic. Controls the cellular uptake by the intestinal epithelium of systemic zinc, which is in turn required to maintain tight junctions and the intestinal permeability. Modifies the activity of zinc-dependent phosphodiesterases, thereby indirectly regulating G protein-coupled receptor signaling pathways important for gluconeogenesis and chondrocyte differentiation. Regulates insulin receptor signaling, glucose uptake, glycogen synthesis and gluconeogenesis in hepatocytes through the zinc-dependent intracellular catabolism of insulin. Through zinc cellular uptake also plays a role in the adaptation of cells to endoplasmic reticulum stress. Major manganese transporter of the basolateral membrane of intestinal epithelial cells, it plays a central role in manganese systemic homeostasis through intestinal manganese uptake. Also involved in manganese extracellular uptake by cells of the blood-brain barrier. May also play a role in manganese and zinc homeostasis participating in their elimination from the blood through the hepatobiliary excretion. Also functions in the extracellular uptake of free iron. May also function intracellularly and mediate the transport from endosomes to cytosol of iron endocytosed by transferrin. Plays a role in innate immunity by regulating the expression of cytokines by activated macrophages. In Homo sapiens (Human), this protein is Metal cation symporter ZIP14.